The following is a 300-amino-acid chain: Ribosomal RNA small subunit methyltransferase H (300 aa).

S-adenosyl-L-methionine is bound by residues G46–H48, D65, F92, D107, and Q114.

It belongs to the methyltransferase superfamily. RsmH family.

It localises to the cytoplasm. The enzyme catalyses cytidine(1402) in 16S rRNA + S-adenosyl-L-methionine = N(4)-methylcytidine(1402) in 16S rRNA + S-adenosyl-L-homocysteine + H(+). In terms of biological role, specifically methylates the N4 position of cytidine in position 1402 (C1402) of 16S rRNA. The sequence is that of Ribosomal RNA small subunit methyltransferase H from Prochlorococcus marinus subsp. pastoris (strain CCMP1986 / NIES-2087 / MED4).